We begin with the raw amino-acid sequence, 563 residues long: PHD finger protein EHD3 (563 aa).

A disordered region spans residues 1 to 46 (MGSQNRPPPPRKRQPPPPEDHLVTYKRRRSKETQPLPLMANGANSK). PHD-type zinc fingers lie at residues 296-348 (LCPC…CSFK), 420-472 (SNLC…CWYC), and 474-524 (SCLC…CKIR).

In terms of assembly, interacts with TRX1. In terms of tissue distribution, expressed in shoot apical meristem and leaves.

Its subcellular location is the nucleus. Functionally, probable transcription factor involved in the regulation of floral induction under long day (LD) conditions. Promotes photoperiodic flowering by repressing GHD7, a major floral repressor. Seems to function independently of HD1. In Oryza sativa subsp. japonica (Rice), this protein is PHD finger protein EHD3.